A 276-amino-acid polypeptide reads, in one-letter code: Dermonecrotic toxin LsaSicTox-alphaIB2i (276 aa).

His-5 is an active-site residue. Residues Glu-25 and Asp-27 each coordinate Mg(2+). The active-site Nucleophile is His-41. 2 disulfide bridges follow: Cys-45–Cys-51 and Cys-47–Cys-190. Asp-85 serves as a coordination point for Mg(2+). 2 N-linked (GlcNAc...) asparagine glycosylation sites follow: Asn-129 and Asn-253.

The protein belongs to the arthropod phospholipase D family. Class II subfamily. The cofactor is Mg(2+). Expressed by the venom gland.

It localises to the secreted. It carries out the reaction an N-(acyl)-sphingosylphosphocholine = an N-(acyl)-sphingosyl-1,3-cyclic phosphate + choline. The catalysed reaction is an N-(acyl)-sphingosylphosphoethanolamine = an N-(acyl)-sphingosyl-1,3-cyclic phosphate + ethanolamine. It catalyses the reaction a 1-acyl-sn-glycero-3-phosphocholine = a 1-acyl-sn-glycero-2,3-cyclic phosphate + choline. The enzyme catalyses a 1-acyl-sn-glycero-3-phosphoethanolamine = a 1-acyl-sn-glycero-2,3-cyclic phosphate + ethanolamine. Dermonecrotic toxins cleave the phosphodiester linkage between the phosphate and headgroup of certain phospholipids (sphingolipid and lysolipid substrates), forming an alcohol (often choline) and a cyclic phosphate. This toxin acts on sphingomyelin (SM). It may also act on ceramide phosphoethanolamine (CPE), lysophosphatidylcholine (LPC) and lysophosphatidylethanolamine (LPE), but not on lysophosphatidylserine (LPS), and lysophosphatidylglycerol (LPG). It acts by transphosphatidylation, releasing exclusively cyclic phosphate products as second products. Induces dermonecrosis, hemolysis, increased vascular permeability, edema, inflammatory response, and platelet aggregation. The chain is Dermonecrotic toxin LsaSicTox-alphaIB2i from Loxosceles sabina (Tucson recluse spider).